The chain runs to 87 residues: Protein U62 (87 aa).

It belongs to the herpesviridae UL91 family.

The polypeptide is Protein U62 (U62) (Human herpesvirus 6B (strain Z29) (HHV-6 variant B)).